The chain runs to 269 residues: Putative carbamate hydrolase RutD (269 aa).

One can recognise an AB hydrolase-1 domain in the interval 26 to 144 (VVLLSSGLGG…CFDTRLHLLN (119 aa)).

Belongs to the AB hydrolase superfamily. Hydrolase RutD family.

The catalysed reaction is carbamate + 2 H(+) = NH4(+) + CO2. Functionally, involved in pyrimidine catabolism. May facilitate the hydrolysis of carbamate, a reaction that can also occur spontaneously. The polypeptide is Putative carbamate hydrolase RutD (Caulobacter vibrioides (strain ATCC 19089 / CIP 103742 / CB 15) (Caulobacter crescentus)).